Consider the following 439-residue polypeptide: Acyl-coenzyme A thioesterase 9, mitochondrial (439 aa).

A mitochondrion-targeting transit peptide spans 1–21 (MRRAALRLCALGKGQLTPGRG). HotDog ACOT-type domains are found at residues 84 to 209 (KDSY…RDSE) and 289 to 401 (ENSK…EKEV). At Lys-103 the chain carries N6-acetyllysine.

This sequence belongs to the acyl coenzyme A hydrolase family. As to quaternary structure, interacts with NYAP1, NYAP2 and MYO16.

Its subcellular location is the mitochondrion. It is found in the mitochondrion matrix. The protein resides in the mitochondrion inner membrane. The catalysed reaction is butanoyl-CoA + H2O = butanoate + CoA + H(+). It carries out the reaction propanoyl-CoA + H2O = propanoate + CoA + H(+). It catalyses the reaction hexadecanoyl-CoA + H2O = hexadecanoate + CoA + H(+). The enzyme catalyses octanoyl-CoA + H2O = octanoate + CoA + H(+). The catalysed reaction is decanoyl-CoA + H2O = decanoate + CoA + H(+). It carries out the reaction tetradecanoyl-CoA + H2O = tetradecanoate + CoA + H(+). It catalyses the reaction 4,8-dimethylnonanoyl-CoA + H2O = 4,8-dimethylnonanoate + CoA + H(+). The enzyme catalyses 3-methylbutanoyl-CoA + H2O = 3-methylbutanoate + CoA + H(+). The catalysed reaction is 2-methylpropanoyl-CoA + H2O = 2-methylpropanoate + CoA + H(+). Its pathway is lipid metabolism; fatty acid metabolism. Its activity is regulated as follows. Strongly inhibited by NADH and CoA. In terms of biological role, mitochondrial acyl-CoA thioesterase. Catalyzes the hydrolysis of acyl-CoAs into free fatty acids and coenzyme A (CoA), regulating their respective intracellular levels. Regulates both mitochondrial lipid and amino acid metabolism. In Homo sapiens (Human), this protein is Acyl-coenzyme A thioesterase 9, mitochondrial.